The sequence spans 705 residues: Ribonuclease R (705 aa).

The region spanning 240-567 (RRDLREQLCF…VHRLLKKALR (328 aa)) is the RNB domain. One can recognise an S1 motif domain in the interval 615–696 (GEEFIGIITG…ERARVEFELI (82 aa)).

Belongs to the RNR ribonuclease family. RNase R subfamily.

The protein resides in the cytoplasm. The enzyme catalyses Exonucleolytic cleavage in the 3'- to 5'-direction to yield nucleoside 5'-phosphates.. Functionally, 3'-5' exoribonuclease that releases 5'-nucleoside monophosphates and is involved in maturation of structured RNAs. The sequence is that of Ribonuclease R from Aquifex aeolicus (strain VF5).